Reading from the N-terminus, the 601-residue chain is Sodium-dependent phosphate transport protein 2C (601 aa).

Residues 1–75 (MPNSLAGDQV…HQVVSGFLKA (75 aa)) lie on the Cytoplasmic side of the membrane. Serine 4 carries the phosphoserine modification. A helical transmembrane segment spans residues 76–96 (CGLLGSLYFFICSLDILSSAF). Topologically, residues 97-110 (QLLGSKMAGDIFKD) are extracellular. The chain crosses the membrane as a helical span at residues 111–131 (NVVLSNPVAGLVIGVVVTVLV). The Cytoplasmic segment spans residues 132–187 (QSSSTSSSIVVSMVASKSLTVQASVPIIMGVNVGTSITSTLVSMAQSGDRDEFQRA). A helical membrane pass occupies residues 188–208 (FGGSAVHGIFNWLTVLVLLPL). Over 209 to 324 (ENATAALERL…FAGSELTDLA (116 aa)) the chain is Extracellular. N-linked (GlcNAc...) asparagine glycosylation is found at asparagine 210, asparagine 264, asparagine 267, and asparagine 299. Cysteine 275 and cysteine 311 are oxidised to a cystine. A helical membrane pass occupies residues 325 to 345 (VGFILLAGSLLVLCVCLVLIV). Residues 346–369 (KLLNSVLRGRIAQAVKTVINADFP) are Cytoplasmic-facing. Residues 370 to 390 (FPFGWLSGYLAILVGAGLTFL) form a helical membrane-spanning segment. The Extracellular portion of the chain corresponds to 391-447 (LQSSSVFTAAIVPLMGVGVINLERAYPLFLGSNIGTTTTALLAALASPADTLLFAVQ). The helical transmembrane segment at 448-468 (VALIHFFFNLAGILLWYLVPV) threads the bilayer. Residues 469 to 487 (LRLPIPLAKRFGDLTAQYR) lie on the Cytoplasmic side of the membrane. Residues 488 to 508 (WVAIVYLLLTFLLLPLAAFGL) traverse the membrane as a helical segment. Over 509-512 (SLAG) the chain is Extracellular. Residues 513–533 (GSVLAAVGGPLVGLVLLIILV) traverse the membrane as a helical segment. At 534–601 (NVLQRHRPSW…NPQVIASQQL (68 aa)) the chain is on the cytoplasmic side.

It belongs to the SLC34A transporter family. Highly expressed in the kidney. Not found in any of the other tested tissues.

It localises to the apical cell membrane. The enzyme catalyses 2 Na(+)(out) + phosphate(out) = 2 Na(+)(in) + phosphate(in). Its function is as follows. Involved in actively transporting phosphate into cells via Na(+) cotransport in the renal brush border membrane. The cotransport has a Na(+):Pi stoichiometry of 2:1 and is electroneutral. This Rattus norvegicus (Rat) protein is Sodium-dependent phosphate transport protein 2C (Slc34a3).